Here is a 314-residue protein sequence, read N- to C-terminus: Vacuolar membrane protein SCRG_03194 (314 aa).

The interval 32 to 60 (KPTSSVVSETSSKSLPSLTSSAFSTSSGA) is disordered. A helical transmembrane segment spans residues 93 to 113 (VYIAVGAVIGAIFISILIWWL). Ser148, Ser254, and Ser274 each carry phosphoserine. Residues 240–309 (EERKLNLNRP…PSMFLDDVLN (70 aa)) are disordered. Basic and acidic residues predominate over residues 254-269 (SPERKEKKINSMEGYH).

It belongs to the PRM5 family.

It is found in the vacuole membrane. This Saccharomyces cerevisiae (strain RM11-1a) (Baker's yeast) protein is Vacuolar membrane protein SCRG_03194.